Reading from the N-terminus, the 518-residue chain is uncharacterized protein (518 aa).

It is found in the virion. This is an uncharacterized protein from Acanthamoeba polyphaga (Amoeba).